The chain runs to 73 residues: Translation initiation factor IF-1 (73 aa).

In terms of domain architecture, S1-like spans 1-72 (MAKEDVIEVE…SRGRITYRYR (72 aa)).

This sequence belongs to the IF-1 family. In terms of assembly, component of the 30S ribosomal translation pre-initiation complex which assembles on the 30S ribosome in the order IF-2 and IF-3, IF-1 and N-formylmethionyl-tRNA(fMet); mRNA recruitment can occur at any time during PIC assembly.

The protein localises to the cytoplasm. Its function is as follows. One of the essential components for the initiation of protein synthesis. Stabilizes the binding of IF-2 and IF-3 on the 30S subunit to which N-formylmethionyl-tRNA(fMet) subsequently binds. Helps modulate mRNA selection, yielding the 30S pre-initiation complex (PIC). Upon addition of the 50S ribosomal subunit IF-1, IF-2 and IF-3 are released leaving the mature 70S translation initiation complex. In Rubrobacter xylanophilus (strain DSM 9941 / JCM 11954 / NBRC 16129 / PRD-1), this protein is Translation initiation factor IF-1.